The sequence spans 210 residues: UPF0173 protein PF0020 (210 aa).

The protein belongs to the UPF0173 family.

The protein is UPF0173 protein PF0020 of Pyrococcus furiosus (strain ATCC 43587 / DSM 3638 / JCM 8422 / Vc1).